Here is a 147-residue protein sequence, read N- to C-terminus: MVHWSCEEKQFITSLWAKVNVEEVGGEALARLLIVYPWTQRFFSSFGNLSSPNAILHNAKVLAHGKKVLTSFGEAVKNLDNIKKTFAQLSELHCEKLHVDPENFKLLGNILIIVLATHFPKEFTPASQAAWTKLVNAVAHALALGYH.

Residues 3–147 (HWSCEEKQFI…VAHALALGYH (145 aa)) enclose the Globin domain. Residues His64 and His93 each contribute to the heme b site.

This sequence belongs to the globin family. As to quaternary structure, heterotetramer of two alpha-D chains and two beta chains. As to expression, red blood cells.

Its function is as follows. Involved in oxygen transport from the lung to the various peripheral tissues. In Chelonoidis carbonarius (Red-footed tortoise), this protein is Hemoglobin subunit beta (HBB).